The sequence spans 594 residues: Beta-mannosyltransferase 3 (594 aa).

Residues 1 to 6 (MRIRSN) are Cytoplasmic-facing. Residues 7-27 (VLLLSTAGALALVWFAVVFSW) form a helical membrane-spanning segment. The Extracellular segment spans residues 28 to 594 (DDKSIFGIPT…KDEVKDTKAK (567 aa)). N-linked (GlcNAc...) asparagine glycosylation is present at Asn305. Residues 512–594 (VTRGEEDRLK…KDEVKDTKAK (83 aa)) are a coiled coil. The span at 517–558 (EDRLKNKEKERKIEEKRKKEEERKKKEEEKKKKEEEEKKKKE) shows a compositional bias: basic and acidic residues. The tract at residues 517–564 (EDRLKNKEKERKIEEKRKKEEERKKKEEEKKKKEEEEKKKKEEEEEEE) is disordered.

Belongs to the BMT family.

The protein resides in the membrane. Beta-mannosyltransferase involved in cell wall biosynthesis. The chain is Beta-mannosyltransferase 3 (BMT3) from Komagataella phaffii (strain ATCC 76273 / CBS 7435 / CECT 11047 / NRRL Y-11430 / Wegner 21-1) (Yeast).